A 988-amino-acid polypeptide reads, in one-letter code: Mediator of RNA polymerase II transcription subunit 24 (988 aa).

Short sequence motifs (LXXLL motif) lie at residues 128–132, 341–345, 445–449, 555–559, 786–790, and 856–860; these read LNWLL, LTPLL, LDLLL, LVALL, LPSLL, and LMRLL.

This sequence belongs to the Mediator complex subunit 24 family. In terms of assembly, component of the Mediator complex.

The protein localises to the nucleus. Its function is as follows. Component of the Mediator complex, a coactivator involved in the regulated transcription of nearly all RNA polymerase II-dependent genes. Mediator functions as a bridge to convey information from gene-specific regulatory proteins to the basal RNA polymerase II transcription machinery. Mediator is recruited to promoters by direct interactions with regulatory proteins and serves as a scaffold for the assembly of a functional preinitiation complex with RNA polymerase II and the general transcription factors. The chain is Mediator of RNA polymerase II transcription subunit 24 (med24) from Xenopus laevis (African clawed frog).